We begin with the raw amino-acid sequence, 257 residues long: NH(3)-dependent NAD(+) synthetase (257 aa).

An ATP-binding site is contributed by 28 to 35 (GISGGVDS). Asp-34 is a binding site for Mg(2+). Residue Arg-109 coordinates deamido-NAD(+). Thr-129 contacts ATP. Residue Glu-134 coordinates Mg(2+). 2 residues coordinate deamido-NAD(+): Lys-142 and Asp-149. ATP contacts are provided by Lys-158 and Ser-180. 240-241 (HK) is a deamido-NAD(+) binding site.

This sequence belongs to the NAD synthetase family. As to quaternary structure, homodimer.

The catalysed reaction is deamido-NAD(+) + NH4(+) + ATP = AMP + diphosphate + NAD(+) + H(+). Its pathway is cofactor biosynthesis; NAD(+) biosynthesis; NAD(+) from deamido-NAD(+) (ammonia route): step 1/1. Catalyzes the ATP-dependent amidation of deamido-NAD to form NAD. Uses ammonia as a nitrogen source. This Pyrococcus horikoshii (strain ATCC 700860 / DSM 12428 / JCM 9974 / NBRC 100139 / OT-3) protein is NH(3)-dependent NAD(+) synthetase.